The chain runs to 352 residues: Adenosine deaminase (352 aa).

Residue Ala2 is modified to N-acetylalanine. Residues His15 and His17 each coordinate Zn(2+). Residues His17 and Asp19 each coordinate substrate. Residue Lys54 is modified to N6-acetyllysine. A substrate-binding site is contributed by Gly184. His214 is a Zn(2+) binding site. The active-site Proton donor is the Glu217. N6-acetyllysine is present on Lys232. Residue Asp295 coordinates Zn(2+). A substrate-binding site is contributed by Asp296.

The protein belongs to the metallo-dependent hydrolases superfamily. Adenosine and AMP deaminases family. In terms of assembly, interacts with DPP4 (via extracellular domain). Interacts with PLG (via Kringle 4 domain); the interaction stimulates PLG activation when in complex with DPP4. Zn(2+) is required as a cofactor. Detected in brain and liver (at protein level).

The protein resides in the cell membrane. Its subcellular location is the cell junction. The protein localises to the cytoplasmic vesicle lumen. It localises to the cytoplasm. It is found in the lysosome. The catalysed reaction is adenosine + H2O + H(+) = inosine + NH4(+). It carries out the reaction 2'-deoxyadenosine + H2O + H(+) = 2'-deoxyinosine + NH4(+). The enzyme catalyses cordycepin + H2O + H(+) = 3'-deoxyinosine + NH4(+). Catalyzes the hydrolytic deamination of adenosine and 2-deoxyadenosine. Plays an important role in purine metabolism and in adenosine homeostasis. Modulates signaling by extracellular adenosine, and so contributes indirectly to cellular signaling events. Acts as a positive regulator of T-cell coactivation, by binding DPP4. Its interaction with DPP4 regulates lymphocyte-epithelial cell adhesion. Enhances dendritic cell immunogenicity by affecting dendritic cell costimulatory molecule expression and cytokines and chemokines secretion. Enhances CD4+ T-cell differentiation and proliferation. Acts as a positive modulator of adenosine receptors ADORA1 and ADORA2A, by enhancing their ligand affinity via conformational change. Stimulates plasminogen activation. Plays a role in male fertility. Plays a protective role in early postimplantation embryonic development. Also responsible for the deamination of cordycepin (3'-deoxyadenosine), a fungal natural product that shows antitumor, antibacterial, antifungal, antivirus, and immune regulation properties. This is Adenosine deaminase (Ada) from Rattus norvegicus (Rat).